We begin with the raw amino-acid sequence, 94 residues long: Large ribosomal subunit protein bL27 (94 aa).

Positions 1 to 9 (MNLANLQLF) are excised as a propeptide. The tract at residues 11–33 (HKKGGGSTSNGRDSQAKRLGAKA) is disordered.

This sequence belongs to the bacterial ribosomal protein bL27 family. Post-translationally, the N-terminus is cleaved by ribosomal processing cysteine protease Prp.

The protein is Large ribosomal subunit protein bL27 of Streptococcus agalactiae serotype V (strain ATCC BAA-611 / 2603 V/R).